Reading from the N-terminus, the 475-residue chain is WASH complex subunit 1 (475 aa).

Residues 1–54 (MTAVKTQHSLAGQVYAVPLIQPDLRREEAIQQVADALQYLQNISGDIFSRISQR) are required for WASH complex assembly. The segment at 1–167 (MTAVKTQHSL…EGLGGLPSNI (167 aa)) is WHD1. A Glycyl lysine isopeptide (Lys-Gly) (interchain with G-Cter in ubiquitin) cross-link involves residue lysine 219. Residues 296-475 (EDGALLAPPP…GDEDEDDWES (180 aa)) form a disordered region. Pro residues predominate over residues 302-318 (APPPPPPPPPPPPPPAP). The interval 357-475 (QGAPKEVVDP…GDEDEDDWES (119 aa)) is VCA. The WH2 domain occupies 369-391 (GRATLLESIRQAGGIGKAKLRSV). Residues 390–406 (SVKERKLEKKKQKEQEQ) are compositionally biased toward basic and acidic residues. The segment covering 432–446 (SGKGPGTGTSEGPGG) has biased composition (gly residues). The segment covering 466 to 475 (GDEDEDDWES) has biased composition (acidic residues).

Belongs to the WASH1 family. Component of the WASH core complex also described as WASH regulatory complex SHRC composed of WASHC1, WASHC2, WASHC3, WASHC4 and WASHC5. The WASH core complex associates with the F-actin-capping protein dimer (formed by CAPZA1, CAPZA2 or CAPZA3 and CAPZB) in a transient or substoichiometric manner which was initially described as WASH complex. Interacts (via WHD1 region) with WASHC2; the interaction is direct. Interacts with BECN1; WASHC1 and AMBRA1 can competitively interact with BECN1. Interacts with BLOC1S2; may associate with the BLOC-1 complex. Interacts with tubulin gamma chain (TUBG1 or TUBG2). Interacts with TBC1D23. Ubiquitinated at Lys-219 via 'Lys-63'-linked ubiquitin chains by the TRIM27:MAGEL2 E3 ubiquitin ligase complex, leading to promote endosomal F-actin assembly.

It localises to the early endosome membrane. The protein resides in the recycling endosome membrane. Its function is as follows. Acts as a component of the WASH core complex that functions as a nucleation-promoting factor (NPF) at the surface of endosomes, where it recruits and activates the Arp2/3 complex to induce actin polymerization, playing a key role in the fission of tubules that serve as transport intermediates during endosome sorting. Regulates the trafficking of endosomal alpha5beta1 integrin to the plasma membrane and involved in invasive cell migration. In T-cells involved in endosome-to-membrane recycling of receptors including T-cell receptor (TCR), CD28 and ITGAL; proposed to be implicated in T-cell proliferation and effector function. In dendritic cells involved in endosome-to-membrane recycling of major histocompatibility complex (MHC) class II probably involving retromer and subsequently allowing antigen sampling, loading and presentation during T-cell activation. Involved in cytokinesis and following polar body extrusion during oocyte meiotic maturation. Involved in Arp2/3 complex-dependent actin assembly driving Salmonella typhimurium invasion independent of ruffling. Involved in the exocytosis of MMP14 leading to matrix remodeling during invasive migration and implicating late endosome-to-plasma membrane tubular connections and cooperation with the exocyst complex. Involved in negative regulation of autophagy independently from its role in endosomal sorting by inhibiting BECN1 ubiquitination to inactivate PIK3C3/Vps34 activity. The polypeptide is WASH complex subunit 1 (Rattus norvegicus (Rat)).